The sequence spans 334 residues: D-fructose 1,6-bisphosphatase class 2/sedoheptulose 1,7-bisphosphatase (334 aa).

Residues D33, E57, D85, and E88 each coordinate Mn(2+). Residues E88–T90, Y119, R164–R166, and D186–D188 each bind substrate. E213 is a Mn(2+) binding site.

Belongs to the FBPase class 2 family. Homotetramer. Mn(2+) is required as a cofactor.

It carries out the reaction beta-D-fructose 1,6-bisphosphate + H2O = beta-D-fructose 6-phosphate + phosphate. It catalyses the reaction D-sedoheptulose 1,7-bisphosphate + H2O = D-sedoheptulose 7-phosphate + phosphate. Its pathway is carbohydrate biosynthesis; Calvin cycle. Catalyzes the hydrolysis of fructose 1,6-bisphosphate (Fru 1,6-P2) and sedoheptulose 1,7-bisphosphate (Sed 1,7-P2) to fructose 6-phosphate and sedoheptulose 7-phosphate, respectively. In Synechococcus sp. (strain RCC307), this protein is D-fructose 1,6-bisphosphatase class 2/sedoheptulose 1,7-bisphosphatase.